Consider the following 367-residue polypeptide: Alanine racemase (367 aa).

Lysine 40 functions as the Proton acceptor; specific for D-alanine in the catalytic mechanism. At lysine 40 the chain carries N6-(pyridoxal phosphate)lysine. Arginine 136 is a substrate binding site. The active-site Proton acceptor; specific for L-alanine is tyrosine 263. Residue methionine 310 coordinates substrate.

It belongs to the alanine racemase family. It depends on pyridoxal 5'-phosphate as a cofactor.

The enzyme catalyses L-alanine = D-alanine. Its pathway is amino-acid biosynthesis; D-alanine biosynthesis; D-alanine from L-alanine: step 1/1. Its function is as follows. Catalyzes the interconversion of L-alanine and D-alanine. May also act on other amino acids. The polypeptide is Alanine racemase (alr) (Streptococcus pneumoniae (strain ATCC 700669 / Spain 23F-1)).